The primary structure comprises 119 residues: Hydrogenase maturation factor HypA (119 aa).

Ni(2+) is bound at residue H2. Zn(2+) is bound by residues C73, C76, C89, and C92.

The protein belongs to the HypA/HybF family.

Involved in the maturation of [NiFe] hydrogenases. Required for nickel insertion into the metal center of the hydrogenase. In Cupriavidus necator (strain ATCC 17699 / DSM 428 / KCTC 22496 / NCIMB 10442 / H16 / Stanier 337) (Ralstonia eutropha), this protein is Hydrogenase maturation factor HypA.